The chain runs to 359 residues: Tyrosine-protein phosphatase non-receptor type 7 (359 aa).

The disordered stretch occupies residues 1–34 (MVQACEGRSRAQLPTLSLGADMTQPPPAKAPAKK). Positions 38–51 (LQERRGSSVALMLD) are interaction with MAP kinases. The residue at position 44 (S44) is a Phosphoserine. T66 bears the Phosphothreonine mark. 2 positions are modified to phosphoserine: S93 and S143. Positions 97–349 (LEEEFLKIPS…QFLHHTLALY (253 aa)) constitute a Tyrosine-protein phosphatase domain. Substrate contacts are provided by residues D257, 290-296 (CSAGIGR), and Q334. C290 acts as the Phosphocysteine intermediate in catalysis. C290 carries the post-translational modification Cysteine sulfenic acid (-SOH).

This sequence belongs to the protein-tyrosine phosphatase family. Non-receptor class subfamily. Oxidized at active site cysteine. Treatment with pervanadate (vanadate and H(2)O(2)) or with antigen enhanced oxidation of active site cysteine.

It is found in the cytoplasm. It localises to the cytoskeleton. It carries out the reaction O-phospho-L-tyrosyl-[protein] + H2O = L-tyrosyl-[protein] + phosphate. Its activity is regulated as follows. Inhibited in cells after FCER1A triggering. May play a role in the regulation of T and B-lymphocyte development and signal transduction. The chain is Tyrosine-protein phosphatase non-receptor type 7 (Ptpn7) from Rattus norvegicus (Rat).